Here is a 205-residue protein sequence, read N- to C-terminus: uncharacterized protein (205 aa).

A signal peptide spans 1–18 (MKASLALLSLLTAFTSHS).

This is an uncharacterized protein from Escherichia coli (strain K12).